A 645-amino-acid polypeptide reads, in one-letter code: Lipase 1 (645 aa).

A signal peptide spans 1–24 (MKRSFIFAPGMLALSISAISNAHA). The active-site Nucleophile is the Ser-34. Catalysis depends on residues Asp-327 and His-330. Residues 383–645 (NEQGKLGVFG…SFSLGVNASF (263 aa)) enclose the Autotransporter domain.

Belongs to the 'GDSL' lipolytic enzyme family.

Its subcellular location is the secreted. The catalysed reaction is a triacylglycerol + H2O = a diacylglycerol + a fatty acid + H(+). The sequence is that of Lipase 1 (lip-1) from Photorhabdus luminescens (Xenorhabdus luminescens).